We begin with the raw amino-acid sequence, 304 residues long: Tyrosine recombinase XerD (304 aa).

Residues 1 to 92 enclose the Core-binding (CB) domain; it reads MKARVLAKTW…VARGLHKFAL (92 aa). A Tyr recombinase domain is found at 113–298; it reads HLPDTLSINE…TADSLREVWR (186 aa). Catalysis depends on residues R156, K180, H250, R253, and H276. Residue Y285 is the O-(3'-phospho-DNA)-tyrosine intermediate of the active site.

The protein belongs to the 'phage' integrase family. XerD subfamily. Forms a cyclic heterotetrameric complex composed of two molecules of XerC and two molecules of XerD.

Its subcellular location is the cytoplasm. Its function is as follows. Site-specific tyrosine recombinase, which acts by catalyzing the cutting and rejoining of the recombining DNA molecules. The XerC-XerD complex is essential to convert dimers of the bacterial chromosome into monomers to permit their segregation at cell division. It also contributes to the segregational stability of plasmids. The protein is Tyrosine recombinase XerD of Corynebacterium glutamicum (strain ATCC 13032 / DSM 20300 / JCM 1318 / BCRC 11384 / CCUG 27702 / LMG 3730 / NBRC 12168 / NCIMB 10025 / NRRL B-2784 / 534).